Here is a 192-residue protein sequence, read N- to C-terminus: Xanthine phosphoribosyltransferase 2 (192 aa).

Xanthine-binding residues include Leu-20 and Asn-27. 131–135 is a 5-phospho-alpha-D-ribose 1-diphosphate binding site; the sequence is ANACA. Lys-159 contacts xanthine.

This sequence belongs to the purine/pyrimidine phosphoribosyltransferase family. Xpt subfamily. In terms of assembly, homodimer.

Its subcellular location is the cytoplasm. The enzyme catalyses XMP + diphosphate = xanthine + 5-phospho-alpha-D-ribose 1-diphosphate. It functions in the pathway purine metabolism; XMP biosynthesis via salvage pathway; XMP from xanthine: step 1/1. In terms of biological role, converts the preformed base xanthine, a product of nucleic acid breakdown, to xanthosine 5'-monophosphate (XMP), so it can be reused for RNA or DNA synthesis. The chain is Xanthine phosphoribosyltransferase 2 from Clostridium perfringens (strain ATCC 13124 / DSM 756 / JCM 1290 / NCIMB 6125 / NCTC 8237 / Type A).